A 1353-amino-acid polypeptide reads, in one-letter code: Protein prickle (1353 aa).

Disordered regions lie at residues 130–206 (VDDG…TKRN), 266–292 (QEEEPPEPPKPALPPKQKQPRPVPPLP), and 500–540 (AKYS…SAHA). A compositionally biased stretch (low complexity) spans 147–165 (TPTATATAGRPLFPLSSSP). Residues 166-178 (RRSKKLLRSLRAH) show a composition bias toward basic residues. Over residues 179–189 (VKGESRPEKPA) the composition is skewed to basic and acidic residues. Over residues 514–532 (LSPALSTPSPPSLLHHPAA) the composition is skewed to low complexity. A PET domain is found at 548–656 (MDMQRQSHSD…NVRQLMSARP (109 aa)). LIM zinc-binding domains follow at residues 655–719 (RPCD…ETLK), 720–780 (PRCS…MFAE), and 781–843 (YCDY…GEPP). Disordered stretches follow at residues 840–892 (GEPP…HQAS), 933–962 (HCRSGDHAGGGDFTDFSGGRASSTSHNMSP), and 1062–1303 (ADIM…SSSS). Residues 861 to 892 (TQRVRPQTRITSSHASSSPPMSPQQQQQHQAS) show a composition bias toward low complexity. Composition is skewed to polar residues over residues 952–962 (RASSTSHNMSP) and 1111–1120 (SLNTPLSAHS). The span at 1130–1142 (SILSGASSSSPMS) shows a compositional bias: low complexity. The segment covering 1177-1205 (GDKDRDRDRERDRDRDRDKGGDKDRESGR) has biased composition (basic and acidic residues). 2 stretches are compositionally biased toward basic residues: residues 1207-1220 (GPGHSSRRRRRRKS) and 1228-1240 (NHHRSGSGHRSHS). Residues 1269-1284 (ETAHKSPRQQRERERE) show a composition bias toward basic and acidic residues.

It belongs to the prickle / espinas / testin family. Interacts with dsh; PET and LIM domains interact with dsh DEP domain, in wing cells. Interacts with Vang in photoreceptor cells.

The protein resides in the cell membrane. Its function is as follows. Acts in a planar cell polarity (PCP) complex; polarization along the apical/basal axis of epithelial cells. PCP signaling in the wing disk requires the receptor fz and the cytoplasmic proteins dsh and pk. These act in a feedback loop leading to activation of the jnk cascade and subsequent polarized arrangement of hairs and bristles. Dgo and pk compete with one another for dsh binding, thereby modulating fz dsh activity and ensuring tight control over fz PCP signaling. Vang, stan and pk function together to regulate the establishment of tissue polarity in the adult eye. In Drosophila pseudoobscura pseudoobscura (Fruit fly), this protein is Protein prickle.